Reading from the N-terminus, the 299-residue chain is Ig alpha chain C region (299 aa).

2 consecutive Ig-like domains span residues 71–167 (PSLS…ATIS) and 174–276 (PQVH…KTID).

In terms of biological role, ig alpha is the major immunoglobulin class in body secretions. It may serve both to defend against local infection and to prevent access of foreign antigens to the general immunologic system. The chain is Ig alpha chain C region from Oryctolagus cuniculus (Rabbit).